A 180-amino-acid polypeptide reads, in one-letter code: Ribosome rescue factor SmrB (180 aa).

Residues 98–173 enclose the Smr domain; sequence LDLHGLTQLI…GDAALLLLVE (76 aa).

Belongs to the SmrB family. In terms of assembly, associates with collided ribosomes, but not with correctly translating polysomes.

Acts as a ribosome collision sensor. Detects stalled/collided disomes (pairs of ribosomes where the leading ribosome is stalled and a second ribosome has collided with it) and endonucleolytically cleaves mRNA at the 5' boundary of the stalled ribosome. Stalled/collided disomes form a new interface (primarily via the 30S subunits) that binds SmrB. Cleaved mRNA becomes available for tmRNA ligation, leading to ribosomal subunit dissociation and rescue of stalled ribosomes. In Proteus mirabilis (strain HI4320), this protein is Ribosome rescue factor SmrB.